The chain runs to 156 residues: Oxidized purine nucleoside triphosphate hydrolase (156 aa).

The Nudix hydrolase domain occupies 3–132 (ASRLYTLVLV…WFPLLLQKKK (130 aa)). Threonine 8 provides a ligand contact to 2-oxo-dATP. The 8-oxo-dGMP site is built by threonine 8 and lysine 23. The 8-oxo-dGTP site is built by threonine 8 and lysine 23. N(6)-methyl-AMP-binding residues include threonine 8 and lysine 23. O(6)-methyl-dGMP is bound by residues threonine 8 and lysine 23. An 8-oxo-ATP-binding site is contributed by phenylalanine 27. 2-oxo-dATP-binding positions include asparagine 33 and 35–38 (FGGK). Asparagine 33 contributes to the 8-oxo-dGMP binding site. Residues asparagine 33 and 35-38 (FGGK) each bind 8-oxo-dGTP. O(6)-methyl-dGMP is bound at residue asparagine 33. Residues 35–38 (FGGK) and glutamate 52 contribute to the 8-oxo-ATP site. Positions 36, 52, 55, 56, and 100 each coordinate Mg(2+). The Nudix box signature appears at 37 to 58 (GKVQEGETIEDGARRELQEESG). An 8-oxo-ATP-binding site is contributed by glutamate 56. 117–120 (WPDD) serves as a coordination point for 2-oxo-dATP. 117–120 (WPDD) contributes to the 8-oxo-dGMP binding site. 117-120 (WPDD) contacts 8-oxo-dGTP. 117 to 120 (WPDD) is a N(6)-methyl-AMP binding site. 117–120 (WPDD) lines the O(6)-methyl-dGMP pocket. 117–120 (WPDD) contributes to the 8-oxo-ATP binding site.

The protein belongs to the Nudix hydrolase family. Monomer. Requires Mg(2+) as cofactor. Post-translationally, the N-terminus is blocked. In terms of tissue distribution, widely expressed with highest expression in thymus, testis, embryo and proliferating blood lymphocytes.

The protein resides in the cytoplasm. It localises to the cytosol. The protein localises to the mitochondrion matrix. Its subcellular location is the nucleus. It carries out the reaction 2-oxo-dATP + H2O = 2-oxo-dAMP + diphosphate + H(+). The catalysed reaction is 2-oxo-ATP + H2O = 2-oxo-AMP + diphosphate + H(+). It catalyses the reaction 8-oxo-dGTP + H2O = 8-oxo-dGMP + diphosphate + H(+). The enzyme catalyses 8-oxo-dATP + H2O = 8-oxo-dAMP + diphosphate + H(+). It carries out the reaction O(6)-methyl-dGTP + H2O = O(6)-methyl-dGMP + diphosphate + H(+). The catalysed reaction is N(6)-methyl-dATP + H2O = N(6)-methyl-dAMP + diphosphate + H(+). It catalyses the reaction N(6)-methyl-ATP + H2O = N(6)-methyl-AMP + diphosphate + H(+). Inhibited by 2-oxo-dADP and 8-oxo-dGDP. Oxidized purine nucleoside triphosphate hydrolase which is a prominent sanitizer of the oxidized nucleotide pool. Catalyzes the hydrolysis of 2-oxo-dATP (2-hydroxy-dATP) into 2-oxo-dAMP. Also has a significant hydrolase activity toward 2-oxo-ATP, 8-oxo-dGTP and 8-oxo-dATP. Through the hydrolysis of oxidized purine nucleoside triphosphates, prevents their incorporation into DNA and the subsequent transversions A:T to C:G and G:C to T:A. Also catalyzes the hydrolysis of methylated purine nucleoside triphosphate preventing their integration into DNA. Through this antimutagenic activity protects cells from oxidative stress. The protein is Oxidized purine nucleoside triphosphate hydrolase (NUDT1) of Homo sapiens (Human).